Reading from the N-terminus, the 272-residue chain is Nuclear transcription factor Y subunit A-1 (272 aa).

Disordered stretches follow at residues 1 to 20 and 34 to 106; these read MQSKPGRENEEEVNNHHAVQ and SFGV…PALS. 2 stretches are compositionally biased toward polar residues: residues 46-61 and 82-92; these read IPSNSSSLDCPNGSES and KDSQAATSSRS. A Subunit association domain (SAD) motif is present at residues 175–198; sequence YVNAKQYEGILRRRKARAKAELER. A DNA-binding region (NFYA/HAP2-type) is located at residues 205–230; it reads KPYLHESRHKHAMRRARASGGRFAKK. The tract at residues 206 to 272 is disordered; the sequence is PYLHESRHKH…NETLNSSGAP (67 aa). Residues 211–221 are compositionally biased toward basic residues; sequence SRHKHAMRRAR. Over residues 229–247 the composition is skewed to basic and acidic residues; that stretch reads KKSEVEAGEDAGGRDRERG. Composition is skewed to polar residues over residues 248-257 and 263-272; these read SATNSSGSEQ and NETLNSSGAP.

The protein belongs to the NFYA/HAP2 subunit family. In terms of assembly, heterotrimeric transcription factor composed of three components, NF-YA, NF-YB and NF-YC. NF-YB and NF-YC must interact and dimerize for NF-YA association and DNA binding. As to expression, ubiquitous.

It localises to the nucleus. Its function is as follows. Stimulates the transcription of various genes by recognizing and binding to a CCAAT motif in promoters. This Arabidopsis thaliana (Mouse-ear cress) protein is Nuclear transcription factor Y subunit A-1 (NFYA1).